The sequence spans 434 residues: Glutamate-1-semialdehyde 2,1-aminomutase (434 aa).

Lysine 274 is subject to N6-(pyridoxal phosphate)lysine.

Belongs to the class-III pyridoxal-phosphate-dependent aminotransferase family. HemL subfamily. Homodimer. The cofactor is pyridoxal 5'-phosphate.

The protein localises to the cytoplasm. The enzyme catalyses (S)-4-amino-5-oxopentanoate = 5-aminolevulinate. The protein operates within porphyrin-containing compound metabolism; protoporphyrin-IX biosynthesis; 5-aminolevulinate from L-glutamyl-tRNA(Glu): step 2/2. This is Glutamate-1-semialdehyde 2,1-aminomutase from Acidovorax sp. (strain JS42).